The sequence spans 422 residues: 5'-deoxyadenosine deaminase (422 aa).

Zn(2+)-binding residues include histidine 57 and histidine 59. The substrate site is built by glutamate 86 and histidine 178. Histidine 205 is a Zn(2+) binding site. 2 residues coordinate substrate: glutamate 208 and aspartate 294. Aspartate 294 serves as a coordination point for Zn(2+).

It belongs to the metallo-dependent hydrolases superfamily. MTA/SAH deaminase family. As to quaternary structure, homotetramer. The cofactor is Zn(2+).

It catalyses the reaction 5'-deoxyadenosine + H2O + H(+) = 5'-deoxyinosine + NH4(+). The enzyme catalyses S-adenosyl-L-homocysteine + H2O + H(+) = S-inosyl-L-homocysteine + NH4(+). It carries out the reaction S-methyl-5'-thioadenosine + H2O + H(+) = S-methyl-5'-thioinosine + NH4(+). The catalysed reaction is adenosine + H2O + H(+) = inosine + NH4(+). It participates in amino-acid biosynthesis; S-adenosyl-L-methionine biosynthesis. In terms of biological role, catalyzes the deamination of three SAM-derived enzymatic products, namely 5'-deoxyadenosine, S-adenosyl-L-homocysteine, and 5'-methylthioadenosine, to produce the inosine analogs. Can also deaminate adenosine. The preferred substrate for this enzyme is 5'-deoxyadenosine, but all these substrates are efficiently deaminated. Likely functions in a S-adenosyl-L-methionine (SAM) recycling pathway from S-adenosyl-L-homocysteine (SAH) produced from SAM-dependent methylation reactions. May also be involved in the recycling of 5'-deoxyadenosine, whereupon the 5'-deoxyribose moiety of 5'-deoxyinosine is further metabolized to deoxyhexoses used for the biosynthesis of aromatic amino acids in methanogens. In Methanococcus vannielii (strain ATCC 35089 / DSM 1224 / JCM 13029 / OCM 148 / SB), this protein is 5'-deoxyadenosine deaminase.